The sequence spans 449 residues: Tubulin alpha-8 chain (449 aa).

Residues Met1–Cys4 carry the MREC motif motif. Residues Gln11, Glu71, Ser140, Gly144, Thr145, Thr179, Asn206, and Asn228 each coordinate GTP. Glu71 contributes to the Mg(2+) binding site. Residue Glu254 is part of the active site.

It belongs to the tubulin family. Dimer of alpha and beta chains. A typical microtubule is a hollow water-filled tube with an outer diameter of 25 nm and an inner diameter of 15 nM. Alpha-beta heterodimers associate head-to-tail to form protofilaments running lengthwise along the microtubule wall with the beta-tubulin subunit facing the microtubule plus end conferring a structural polarity. Microtubules usually have 13 protofilaments but different protofilament numbers can be found in some organisms and specialized cells. Requires Mg(2+) as cofactor. Some glutamate residues at the C-terminus are polyglycylated, resulting in polyglycine chains on the gamma-carboxyl group. Glycylation is mainly limited to tubulin incorporated into axonemes (cilia and flagella) whereas glutamylation is prevalent in neuronal cells, centrioles, axonemes, and the mitotic spindle. Both modifications can coexist on the same protein on adjacent residues, and lowering polyglycylation levels increases polyglutamylation, and reciprocally. Cilia and flagella glycylation is required for their stability and maintenance. Flagella glycylation controls sperm motility. In terms of processing, some glutamate residues at the C-terminus are polyglutamylated, resulting in polyglutamate chains on the gamma-carboxyl group. Polyglutamylation plays a key role in microtubule severing by spastin (SPAST). SPAST preferentially recognizes and acts on microtubules decorated with short polyglutamate tails: severing activity by SPAST increases as the number of glutamates per tubulin rises from one to eight, but decreases beyond this glutamylation threshold. Glutamylation is also involved in cilia motility. Post-translationally, the C-terminal phenylalanine residue is cleaved by MATCAP1/KIAA0895L. In terms of tissue distribution, expressed at highest levels in the testis, followed by skeletal and heart muscle. Expressed at low levels in the developing brain.

The protein resides in the cytoplasm. It localises to the cytoskeleton. The catalysed reaction is GTP + H2O = GDP + phosphate + H(+). Its function is as follows. Tubulin is the major constituent of microtubules, a cylinder consisting of laterally associated linear protofilaments composed of alpha- and beta-tubulin heterodimers. Microtubules grow by the addition of GTP-tubulin dimers to the microtubule end, where a stabilizing cap forms. Below the cap, tubulin dimers are in GDP-bound state, owing to GTPase activity of alpha-tubulin. The protein is Tubulin alpha-8 chain (Tuba8) of Mus musculus (Mouse).